A 96-amino-acid chain; its full sequence is MF6 protein (96 aa).

This is MF6 protein from Myxoma virus (strain Uriarra) (MYXV).